Reading from the N-terminus, the 461-residue chain is Serine/threonine-protein kinase ppk24, mitochondrial (461 aa).

In terms of domain architecture, Protein kinase spans 120-416 (FQHLKSIAKG…LDSILGTAWV (297 aa)). Residues 126–134 (IAKGATSTI) and Lys-153 contribute to the ATP site. Residue Asp-256 is the Proton acceptor of the active site.

Belongs to the protein kinase superfamily. Ser/Thr protein kinase family.

The protein localises to the mitochondrion. It catalyses the reaction L-seryl-[protein] + ATP = O-phospho-L-seryl-[protein] + ADP + H(+). The catalysed reaction is L-threonyl-[protein] + ATP = O-phospho-L-threonyl-[protein] + ADP + H(+). Its function is as follows. Has a role late in meiosis. The protein is Serine/threonine-protein kinase ppk24, mitochondrial (ppk24) of Schizosaccharomyces pombe (strain 972 / ATCC 24843) (Fission yeast).